Consider the following 109-residue polypeptide: Nucleoid-associated protein BUsg_467 (109 aa).

This sequence belongs to the YbaB/EbfC family. Homodimer.

It localises to the cytoplasm. Its subcellular location is the nucleoid. Its function is as follows. Binds to DNA and alters its conformation. May be involved in regulation of gene expression, nucleoid organization and DNA protection. This chain is Nucleoid-associated protein BUsg_467, found in Buchnera aphidicola subsp. Schizaphis graminum (strain Sg).